Here is a 547-residue protein sequence, read N- to C-terminus: Membrane protein insertase YidC (547 aa).

Transmembrane regions (helical) follow at residues 6–26, 328–348, 351–371, 425–445, 459–479, and 499–519; these read LILV…WQKY, VVDY…LEAI, LVGN…AVFF, LPIL…LGAV, LASA…MFVQ, and PLIF…YWVV.

The protein belongs to the OXA1/ALB3/YidC family. Type 1 subfamily. Interacts with the Sec translocase complex via SecD. Specifically interacts with transmembrane segments of nascent integral membrane proteins during membrane integration.

The protein resides in the cell inner membrane. In terms of biological role, required for the insertion and/or proper folding and/or complex formation of integral membrane proteins into the membrane. Involved in integration of membrane proteins that insert both dependently and independently of the Sec translocase complex, as well as at least some lipoproteins. Aids folding of multispanning membrane proteins. The polypeptide is Membrane protein insertase YidC (Dechloromonas aromatica (strain RCB)).